A 130-amino-acid polypeptide reads, in one-letter code: Small ribosomal subunit protein uS9 (130 aa).

Belongs to the universal ribosomal protein uS9 family.

The chain is Small ribosomal subunit protein uS9 from Janthinobacterium sp. (strain Marseille) (Minibacterium massiliensis).